The following is a 288-amino-acid chain: dTDP-4-keto-6-deoxy-D-glucose reductase (288 aa).

Residues 12-14, 38-39, 62-64, Tyr127, and Lys131 each bind NADH; these read GML, DI, and AWT. NADPH-binding positions include 13–14, 38–39, 62–64, Tyr127, and Lys131; these read ML, DI, and AWT. Tyr127 serves as the catalytic Proton donor/acceptor.

The protein belongs to the dTDP-4-dehydrorhamnose reductase family. The cofactor is Mg(2+).

It participates in antibiotic biosynthesis; novobiocin biosynthesis. In terms of biological role, reduces the product formed from the reaction of NovW with dTDP-4-keto-6-deoxy-D-glucose to result in dTDP-5-methyl-L-rhamnose in the novobiocin biosynthesis pathway, an aminocoumarin family antibiotic that targets bacterial DNA gyrases. In Streptomyces niveus (Streptomyces spheroides), this protein is dTDP-4-keto-6-deoxy-D-glucose reductase (novS).